A 152-amino-acid polypeptide reads, in one-letter code: MGLSTLEQKLTEMITAPVEALGFELVGIEFIRGRTSTLRIYIDSEDGINVDDCADVSHQVSAVLDVEDPITVAYNLEVSSPGLDRPLFTAEHYARFVGEEVTLVLRMAVQNRRKWQGVIKAVDGEMITVTVEGKDEVFALSNIQKANLVPHF.

This sequence belongs to the RimP family.

It localises to the cytoplasm. Functionally, required for maturation of 30S ribosomal subunits. In Escherichia coli (strain K12 / MC4100 / BW2952), this protein is Ribosome maturation factor RimP.